The chain runs to 192 residues: dTTP/UTP pyrophosphatase (192 aa).

The active-site Proton acceptor is D70.

The protein belongs to the Maf family. YhdE subfamily. Requires a divalent metal cation as cofactor.

The protein localises to the cytoplasm. The catalysed reaction is dTTP + H2O = dTMP + diphosphate + H(+). The enzyme catalyses UTP + H2O = UMP + diphosphate + H(+). Nucleoside triphosphate pyrophosphatase that hydrolyzes dTTP and UTP. May have a dual role in cell division arrest and in preventing the incorporation of modified nucleotides into cellular nucleic acids. In Clostridium perfringens (strain ATCC 13124 / DSM 756 / JCM 1290 / NCIMB 6125 / NCTC 8237 / Type A), this protein is dTTP/UTP pyrophosphatase.